A 730-amino-acid polypeptide reads, in one-letter code: Cyclin-T2 (730 aa).

Residues 1 to 300 (MASGRGASSR…SVTGVPTNPS (300 aa)) form an interaction with MDFIC and MDFI region. In terms of domain architecture, Cyclin N-terminal spans 12 to 147 (FFTREQLENT…IMLQTLGFEI (136 aa)). The tract at residues 250-300 (RLKKIRNWRANQAARKPKVDGQVSETPLLGSSLVQNSILVDSVTGVPTNPS) is interaction with POLR2A. Composition is skewed to polar residues over residues 341 to 350 (TSYGLSSHQE) and 360 to 389 (TEQL…SISL). The interval 341-430 (TSYGLSSHQE…GPISTTPGII (90 aa)) is disordered. Residues 398-412 (DKISDHSSVKQEYTH) are compositionally biased toward basic and acidic residues. A Glycyl lysine isopeptide (Lys-Gly) (interchain with G-Cter in SUMO2) cross-link involves residue Lys-407. Phosphoserine is present on Ser-480. The interval 497–652 (DKKEKSGSLK…SSSSSSSSVK (156 aa)) is disordered. Basic and acidic residues-rich tracts occupy residues 517-543 (SASK…EGSG) and 552-565 (ISRD…EHPS). Over residues 566–578 (SRHHTSSHKHSHS) the composition is skewed to basic residues. Residues 579-588 (HSGSSSGGSK) are compositionally biased toward low complexity. Position 601 is a phosphoserine (Ser-601). Low complexity-rich tracts occupy residues 606-616 (SSDGISSSSSS) and 637-652 (SSKS…SSVK).

It belongs to the cyclin family. Cyclin C subfamily. In terms of assembly, interacts with CDK9 to form P-TEFb. Interacts with POLR2A (via the C-terminal domain (CTD)); mediates transcriptional activity. Interacts with HEXIM1; mediates formation of a tripartite complex with KPNA2. Interacts with HEXIM2. Interacts with PKN1; enhances MYOD1-dependent transcription. P-TEFB complex interacts with RB1; promotes phosphorylation of RB1. P-TEFB complex interacts with MYOD1; promotes the transcriptional activity of MYOD1 through its CDK9-mediated phosphorylation. Interacts with MDFI and MDFIC. Interacts with MON1B; down-regulates CCNT2-mediated activation of viral promoters during herpes simplex virus 1/HHV-1 infection. (Microbial infection) Interacts with HIV-2 and SIV Tat. Does not bind efficiently to the transactivation domain of the HIV-1 Tat. Ubiquitously expressed.

The protein resides in the cytoplasm. Its subcellular location is the perinuclear region. It is found in the nucleus. Its function is as follows. Regulatory subunit of the cyclin-dependent kinase pair (CDK9/cyclin T) complex, also called positive transcription elongation factor B (P-TEFB), which is proposed to facilitate the transition from abortive to production elongation by phosphorylating the CTD (carboxy-terminal domain) of the large subunit of RNA polymerase II (RNAP II). The activity of this complex is regulated by binding with 7SK snRNA. Plays a role during muscle differentiation; P-TEFB complex interacts with MYOD1; this tripartite complex promotes the transcriptional activity of MYOD1 through its CDK9-mediated phosphorylation and binds the chromatin of promoters and enhancers of muscle-specific genes; this event correlates with hyperphosphorylation of the CTD domain of RNA pol II. In addition, enhances MYOD1-dependent transcription through interaction with PKN1. Involved in early embryo development. In terms of biological role, (Microbial infection) Promotes transcriptional activation of early and late herpes simplex virus 1/HHV-1 promoters. In Homo sapiens (Human), this protein is Cyclin-T2.